Reading from the N-terminus, the 746-residue chain is Iron-sulfur clusters transporter ABCB7, mitochondrial (746 aa).

A mitochondrion-targeting transit peptide spans 1–19 (MAPMLVSLNCGIRVQRRTL). The Mitochondrial matrix segment spans residues 20 to 133 (TLLIRQTSSY…KDRPDLRARV (114 aa)). The 297-residue stretch at 133-429 (VAVSLGLLAG…LGTVYRETRQ (297 aa)) folds into the ABC transmembrane type-1 domain. The chain crosses the membrane as a helical span at residues 134-154 (AVSLGLLAGAKLTNVMVPFMF). Residues 155–176 (KYAVDELNQMSGHMLNLNDAPS) lie on the Mitochondrial intermembrane side of the membrane. The chain crosses the membrane as a helical span at residues 177 to 199 (TVATMTTAVLIGYGVSRAGSALF). The Mitochondrial matrix portion of the chain corresponds to 200–252 (NELRNTVFGKVAQSSIRRIAKNVFLHLHNLDLGFHLSRQTGALSKAIDRGTRG). The chain crosses the membrane as a helical span at residues 253–273 (ISFVLSALVFNLGPTVFEMFL). Residues 274–283 (VSAILYYKCG) lie on the Mitochondrial intermembrane side of the membrane. Residues 284-304 (GEFAAVALGTLSAYTIFTILV) traverse the membrane as a helical segment. At 305–375 (TQWRTRFRIE…TLAMLNFGQS (71 aa)) the chain is on the mitochondrial matrix side. Glutathione is bound by residues 308–312 (RTRFR) and 371–374 (NFGQ). A helical transmembrane segment spans residues 376–396 (AIFSVGLTAIMLLASKGIAAG). The Mitochondrial intermembrane segment spans residues 397–402 (NMTVGD). Residues 403–423 (LVMVNGLLFQLSLPLNFLGTV) form a helical membrane-spanning segment. Glutathione is bound at residue glycine 421. Topologically, residues 424–746 (YRETRQALID…SVKGCGNCSC (323 aa)) are mitochondrial matrix. An ABC transporter domain is found at 465 to 699 (IRFEDVYFEY…PGSLYAELWN (235 aa)). ATP is bound by residues tyrosine 474 and 498 to 505 (GGSGSGKS). The tract at residues 708–728 (SRKSSSAPAAERLSQKEEERK) is disordered.

Belongs to the ABC transporter superfamily. ABCB family. Heavy Metal importer (TC 3.A.1.210) subfamily. As to quaternary structure, homodimer.

The protein resides in the mitochondrion inner membrane. It localises to the mitochondrion. The catalysed reaction is (glutathione)4[2Fe(III)-2S] cluster(in) + ATP + H2O = (glutathione)4[2Fe(III)-2S] cluster(out) + ADP + phosphate + H(+). Functionally, exports glutathione-coordinated iron-sulfur clusters such as [2Fe-2S]-(GS)4 cluster from the mitochondria to the cytosol in an ATP-dependent manner allowing the assembly of the cytosolic iron-sulfur (Fe/S) cluster-containing proteins and participates in iron homeostasis. May play a role in iron and lipid metabolism. This Oryzias latipes (Japanese rice fish) protein is Iron-sulfur clusters transporter ABCB7, mitochondrial.